Reading from the N-terminus, the 139-residue chain is Ribulose bisphosphate carboxylase small subunit (139 aa).

Belongs to the RuBisCO small chain family. Heterohexadecamer of 8 large and 8 small subunits.

Its subcellular location is the plastid. It localises to the chloroplast. Functionally, ruBisCO catalyzes two reactions: the carboxylation of D-ribulose 1,5-bisphosphate, the primary event in carbon dioxide fixation, as well as the oxidative fragmentation of the pentose substrate in the photorespiration process. Both reactions occur simultaneously and in competition at the same active site. Although the small subunit is not catalytic it is essential for maximal activity. This is Ribulose bisphosphate carboxylase small subunit from Guillardia theta (Cryptophyte).